The primary structure comprises 168 residues: Endoribonuclease YbeY (168 aa).

3 residues coordinate Zn(2+): His-122, His-126, and His-132.

It belongs to the endoribonuclease YbeY family. Zn(2+) is required as a cofactor.

Its subcellular location is the cytoplasm. Its function is as follows. Single strand-specific metallo-endoribonuclease involved in late-stage 70S ribosome quality control and in maturation of the 3' terminus of the 16S rRNA. This chain is Endoribonuclease YbeY, found in Brucella abortus (strain 2308).